We begin with the raw amino-acid sequence, 338 residues long: S-adenosylmethionine:tRNA ribosyltransferase-isomerase (338 aa).

This sequence belongs to the QueA family. Monomer.

It localises to the cytoplasm. It carries out the reaction 7-aminomethyl-7-carbaguanosine(34) in tRNA + S-adenosyl-L-methionine = epoxyqueuosine(34) in tRNA + adenine + L-methionine + 2 H(+). It participates in tRNA modification; tRNA-queuosine biosynthesis. In terms of biological role, transfers and isomerizes the ribose moiety from AdoMet to the 7-aminomethyl group of 7-deazaguanine (preQ1-tRNA) to give epoxyqueuosine (oQ-tRNA). The polypeptide is S-adenosylmethionine:tRNA ribosyltransferase-isomerase (Francisella tularensis subsp. holarctica (strain FTNF002-00 / FTA)).